The following is a 527-amino-acid chain: Inositolphosphotransferase 1 (527 aa).

Residues 1 to 24 (MNVIFSLASFVKNMYNASLNQRNL) lie on the Cytoplasmic side of the membrane. The chain crosses the membrane as a helical span at residues 25–45 (ISLPFNFMLNFAPVFIWLSIF). Topologically, residues 46 to 99 (KRAGLIPIRLRPDIHSKFAFFADQFLFGDYWHELTVQLPDNTSKLFFWSFISSS) are lumenal. A helical membrane pass occupies residues 100 to 120 (AFLLVFLICIPFAIWYYIYYI). Topologically, residues 121–152 (KHVNYNLLEWFANIFHYPCKRKQRPIQKRFRT) are cytoplasmic. A helical membrane pass occupies residues 153–173 (IFIPFALPLFTFVILNIDHFF). At 174–190 (AYQSDANFTKTKDLLAW) the chain is on the lumenal side. The helical transmembrane segment at 191-211 (FSYVILHLTAPILTAVYLYVF) threads the bilayer. At 212–219 (QPPGTLKC) the chain is on the cytoplasmic side. A helical transmembrane segment spans residues 220 to 240 (FSFALGLQNIAGVLTHLLVPM). The Lumenal portion of the chain corresponds to 241 to 288 (ASPWFTHLYGIDDTEHVNYTQEGFAAGLIRVDSHLGTHLNTKGFHMSP). Residues 289 to 309 (IVFGAVPSLHSAIAFQCFLFL) traverse the membrane as a helical segment. Topologically, residues 310 to 435 (VSRSTSLKHR…KWIFKIVNDG (126 aa)) are cytoplasmic. The segment at 331–404 (NDSSTFKLSE…GGGDGSIINS (74 aa)) is disordered. The span at 376-389 (ERSSSPSSSFTVSS) shows a compositional bias: low complexity. A helical transmembrane segment spans residues 436-456 (FIPKFWAILYIILQWWATMYL). Residues 457-461 (DHHYR) lie on the Lumenal side of the membrane. The chain crosses the membrane as a helical span at residues 462–482 (FDLFVGVLYAMTSFIIINWFV). The Cytoplasmic segment spans residues 483–527 (LQPKVLKKWIHIRLGDKVDTRNEARTFGMRVFCGTKMEWFFDPLA).

The protein localises to the golgi apparatus membrane. The catalysed reaction is an alpha-D-mannosyl-(1&lt;-&gt;6)-1D-myo-inositol-1-phospho-N-[(R)-2-hydroxy-very-long-chain fatty acyl]-(R)-4-hydroxysphingoid base + a 1,2-diacyl-sn-glycero-3-phospho-(1D-myo-inositol) = an alpha-D-mannosyl-6-(1D-myo-inositol phospho)-(1&lt;-&gt;6)-1D-myo-inositol-1-phospho-N-[(R)-2-hydroxy-very-long-chain fatty acyl]-(R)-4-hydroxysphingoid base + a 1,2-diacyl-sn-glycerol. It catalyses the reaction a mannosylinositol-1-phospho-N-acyl-sphingoid base + a 1,2-diacyl-sn-glycero-3-phospho-(1D-myo-inositol) = an inositol phosphomannosylnositol-1-phospho-N-acylsphingoid base + a 1,2-diacyl-sn-glycerol. It carries out the reaction a mannosylinositol-1-phospho-N-(2-hydroxyacyl)-4R-hydroxysphingoid base + a 1,2-diacyl-sn-glycero-3-phospho-(1D-myo-inositol) = an inositol phosphomannosylnositol-1-phospho-N-(2-hydroxyacyl)-4R-hydroxysphingoid base + a 1,2-diacyl-sn-glycerol. Functionally, catalyzes the addition of a phosphorylinositol group onto mannosyl phosphorylinositol ceramide (MIPC) to form mannosyl diphosphorylinositol ceramide (M(IP)2C), the major sphingolipid in membranes of S.cerevisiae. This chain is Inositolphosphotransferase 1, found in Saccharomyces cerevisiae (strain ATCC 204508 / S288c) (Baker's yeast).